A 363-amino-acid polypeptide reads, in one-letter code: Peptide chain release factor 1 (363 aa).

Glutamine 237 carries the N5-methylglutamine modification. Basic and acidic residues predominate over residues 286 to 296 (EKRRSAEESTR). The tract at residues 286-305 (EKRRSAEESTRRSLVASGDR) is disordered.

This sequence belongs to the prokaryotic/mitochondrial release factor family. Methylated by PrmC. Methylation increases the termination efficiency of RF1.

Its subcellular location is the cytoplasm. In terms of biological role, peptide chain release factor 1 directs the termination of translation in response to the peptide chain termination codons UAG and UAA. The chain is Peptide chain release factor 1 from Shewanella baltica (strain OS155 / ATCC BAA-1091).